The chain runs to 405 residues: Aspartokinase (405 aa).

ACT domains follow at residues 267–344 and 345–405; these read VSME…AKVS and IVGV…QLDQ.

This sequence belongs to the aspartokinase family.

The enzyme catalyses L-aspartate + ATP = 4-phospho-L-aspartate + ADP. Its pathway is amino-acid biosynthesis; L-lysine biosynthesis via DAP pathway; (S)-tetrahydrodipicolinate from L-aspartate: step 1/4. The protein operates within amino-acid biosynthesis; L-methionine biosynthesis via de novo pathway; L-homoserine from L-aspartate: step 1/3. It functions in the pathway amino-acid biosynthesis; L-threonine biosynthesis; L-threonine from L-aspartate: step 1/5. The chain is Aspartokinase (lysC) from Helicobacter pylori (strain J99 / ATCC 700824) (Campylobacter pylori J99).